Reading from the N-terminus, the 333-residue chain is Replication factor C subunit 2 (333 aa).

Ala-2 carries the post-translational modification N-acetylalanine. 55 to 62 (GPPGTGKT) lines the ATP pocket.

Belongs to the activator 1 small subunits family. Heterotetramer of subunits RFC2, RFC3, RFC4 and RFC5 that can form a complex with RFC1.

It localises to the nucleus. May be involved in DNA replication and thus regulate cell proliferation. This is Replication factor C subunit 2 (RFC2) from Arabidopsis thaliana (Mouse-ear cress).